A 250-amino-acid chain; its full sequence is MYKLVLIRHGESTWNLDNRFTGWTDVDLTETGIAQAKNSGQLLKAEGYDFDLAYTSVLKRATRTLWHVLDEMDQTWLPVEHSWRLNERHYGDLQGLNKAETAKKFGDEQVLVWRRSYDTPPPPLAANDPRSERSDRRYANLLPGQVPLTECLKDTVERVLPFWNEAMAPAIKAGKRIVVAAHGNSIRALVKYLDNISDSDIVGLNIPNGIPLVYELDENLKPLRSYYLGDSEAAAKAAAAVGAQGKAVAA.

Substrate is bound by residues 8–15 (RHGESTWN), 21–22 (TG), Arg60, 87–90 (ERHY), Lys98, and 114–115 (RR). Catalysis depends on His9, which acts as the Tele-phosphohistidine intermediate. Glu87 acts as the Proton donor/acceptor in catalysis. The tract at residues 116–135 (SYDTPPPPLAANDPRSERSD) is disordered. 183 to 184 (GN) contributes to the substrate binding site.

It belongs to the phosphoglycerate mutase family. BPG-dependent PGAM subfamily. As to quaternary structure, homodimer.

The enzyme catalyses (2R)-2-phosphoglycerate = (2R)-3-phosphoglycerate. It participates in carbohydrate degradation; glycolysis; pyruvate from D-glyceraldehyde 3-phosphate: step 3/5. Functionally, catalyzes the interconversion of 2-phosphoglycerate and 3-phosphoglycerate. In Polaromonas naphthalenivorans (strain CJ2), this protein is 2,3-bisphosphoglycerate-dependent phosphoglycerate mutase.